A 130-amino-acid chain; its full sequence is UPF0225 protein DR_0483 (130 aa).

The protein belongs to the UPF0225 family.

This Deinococcus radiodurans (strain ATCC 13939 / DSM 20539 / JCM 16871 / CCUG 27074 / LMG 4051 / NBRC 15346 / NCIMB 9279 / VKM B-1422 / R1) protein is UPF0225 protein DR_0483.